The sequence spans 667 residues: Flavin-dependent halogenase malA (667 aa).

4 residues coordinate FAD: histidine 48, glutamate 70, isoleucine 79, and serine 82. The active site involves lysine 108. FAD-binding residues include arginine 144, valine 168, aspartate 399, and isoleucine 412. Position 494 (glutamate 494) interacts with substrate. Residues cysteine 597, cysteine 600, cysteine 613, and cysteine 616 each contribute to the Zn(2+) site. Residues 621 to 646 (TEPQTAVTFDPPLTAEEEALLYAAWN) are flexible region.

It belongs to the flavin-dependent halogenase family. It depends on Zn(2+) as a cofactor.

It carries out the reaction (+)-premalbrancheamide + 2 FAD + 2 chloride + 4 H(+) = (+)-malbrancheamide + 2 FADH2. It catalyses the reaction (+)-premalbrancheamide + FAD + chloride + 2 H(+) = (+)-malbrancheamide B + FADH2. The catalysed reaction is (+)-premalbrancheamide + FAD + chloride + 2 H(+) = (+)-isomalbrancheamide B + FADH2. The enzyme catalyses (+)-malbrancheamide B + FAD + chloride + 2 H(+) = (+)-malbrancheamide + FADH2. It carries out the reaction (+)-isomalbrancheamide B + FAD + chloride + 2 H(+) = (+)-malbrancheamide + FADH2. It catalyses the reaction (+)-premalbrancheamide + bromide + FAD + 2 H(+) = (+)-malbrancheamide C + FADH2. The catalysed reaction is (+)-premalbrancheamide + bromide + FAD + 2 H(+) = (+)-isomalbrancheamide C + FADH2. The enzyme catalyses (+)-malbrancheamide B + bromide + FAD + 2 H(+) = (+)-malbrancheamide D + FADH2. It carries out the reaction (+)-isomalbrancheamide B + bromide + FAD + 2 H(+) = (+)-isomalbrancheamide D + FADH2. The protein operates within alkaloid biosynthesis. Its function is as follows. Flavin-dependent halogenase; part of the gene cluster that mediates the biosynthesis of malbrancheamide, a dichlorinated fungal indole alkaloid that belongs to a family of natural products containing a characteristic bicyclo[2.2.2]diazaoctane core. The first step of malbrancheamide biosynthesis involves coupling of L-proline and L-tryptophan by malG, a bimodular NRPS, to produce L-Pro-L-Trp aldehyde through reductive offloading. This compound undergoes spontaneous cyclization and dehydration to give a dienamine which is reverse prenylated at C-2 by malE. The other prenyltransferase present in the cluster, malB, displays modest activity, suggesting that may be a redundant gene in the pathway. Subsequently, a [4+2] Diels-Alder cyclo-addition catalyzed by the bifunctional enzyme malC forms the characteristic bicyclo[2.2.2]diazaoctane ring of premalbrancheamid. Finally, the flavin-dependent halogenase malA catalyzes the iterative dichlorination of the indole ring of premalbrancheamide to yield C-9 monochlorinated malbrancheamide B, C-8 monochlorinated isomalbrancheamide B, and dichlorinated malbrancheamide. MalA is also able to brominate premalbrancheamide at C-9 to yield malbrancheamide C, and, to a lesser extend, at C-8 to yield isomalbrancheamide C. Finally, malA can brominate C-9 monochlorinated malbrancheamide B at C-8 to yield malbrancheamide D, or C-8 monochlorinated isomalbrancheamide B at C-9 to produce isomalbrancheamide D. The sequence is that of Flavin-dependent halogenase malA from Malbranchea aurantiaca.